We begin with the raw amino-acid sequence, 302 residues long: 1,2-dihydroxynaphthalene dioxygenase (302 aa).

VOC domains lie at 9 to 124 (ELGY…IFWG) and 149 to 270 (GLGH…PGWR). Position 152 (His152) interacts with Fe cation. Residues His152, 199-200 (DH), His215, and Tyr256 each bind substrate. His215 is a binding site for Fe cation. Position 266 (Glu266) interacts with Fe cation.

Belongs to the extradiol ring-cleavage dioxygenase family. Requires Fe(2+) as cofactor.

It carries out the reaction naphthalene-1,2-diol + O2 = 2-hydroxychromene-2-carboxylate + H(+). It participates in aromatic compound metabolism; naphthalene degradation. Its activity is regulated as follows. Inhibited by bathophenanthroline sulfonate, o-phenanthroline, 8-hydroxyquinoline, 2,2'-dipyridyl and p-chlormercuribenzoate. Also inhibited by Hg(2+), Cu(2+), Co(2+) and Fe(3+) ions. Functionally, involved in the naphthalene catabolic pathway. Catalyzes the meta-cleavage of 1,2-dihydroxynaphthalene (1,2-DHN) to yield 2-hydroxychromene-2-carboxylic acid. Can also cleave 3-methylcatechol and 4-methylcatechol. This chain is 1,2-dihydroxynaphthalene dioxygenase (nahC), found in Pseudomonas putida (Arthrobacter siderocapsulatus).